A 474-amino-acid polypeptide reads, in one-letter code: Dihydrolipoyl dehydrogenase (474 aa).

Residues glutamate 39–cysteine 47, lysine 56, and alanine 118 contribute to the FAD site. Cysteines 47 and 52 form a disulfide. NAD(+) contacts are provided by residues glycine 186–isoleucine 190, glutamate 209, and alanine 275–arginine 278. FAD is bound by residues aspartate 318 and alanine 326. Residue histidine 450 is the Proton acceptor of the active site.

It belongs to the class-I pyridine nucleotide-disulfide oxidoreductase family. Homodimer. It depends on FAD as a cofactor.

Its subcellular location is the cytoplasm. It catalyses the reaction N(6)-[(R)-dihydrolipoyl]-L-lysyl-[protein] + NAD(+) = N(6)-[(R)-lipoyl]-L-lysyl-[protein] + NADH + H(+). The protein is Dihydrolipoyl dehydrogenase (lpdA) of Halobacterium salinarum (strain ATCC 700922 / JCM 11081 / NRC-1) (Halobacterium halobium).